A 329-amino-acid chain; its full sequence is 4-hydroxythreonine-4-phosphate dehydrogenase (329 aa).

Residues H136 and T137 each contribute to the substrate site. The a divalent metal cation site is built by H166, H211, and H266. Residues K274, N283, and R292 each contribute to the substrate site.

This sequence belongs to the PdxA family. Homodimer. Zn(2+) is required as a cofactor. The cofactor is Mg(2+). Requires Co(2+) as cofactor.

It is found in the cytoplasm. It catalyses the reaction 4-(phosphooxy)-L-threonine + NAD(+) = 3-amino-2-oxopropyl phosphate + CO2 + NADH. It functions in the pathway cofactor biosynthesis; pyridoxine 5'-phosphate biosynthesis; pyridoxine 5'-phosphate from D-erythrose 4-phosphate: step 4/5. Functionally, catalyzes the NAD(P)-dependent oxidation of 4-(phosphooxy)-L-threonine (HTP) into 2-amino-3-oxo-4-(phosphooxy)butyric acid which spontaneously decarboxylates to form 3-amino-2-oxopropyl phosphate (AHAP). The chain is 4-hydroxythreonine-4-phosphate dehydrogenase from Escherichia coli O17:K52:H18 (strain UMN026 / ExPEC).